Reading from the N-terminus, the 487-residue chain is F-box/LRR-repeat protein At1g48400 (487 aa).

The region spanning 9-57 (RDSISNLPDEILGKILSLLPTKVAASTSVLSKRWRNLLGLVDNLCFDES) is the F-box domain. LRR repeat units lie at residues 71–97 (SLRF…SLSR), 125–153 (HLHA…TLSA), 174–199 (SILG…YMRD), 225–251 (THNP…DYSS), 327–358 (TLHL…SIES), and 359–384 (NKDK…VIKG).

This Arabidopsis thaliana (Mouse-ear cress) protein is F-box/LRR-repeat protein At1g48400.